A 507-amino-acid chain; its full sequence is ATP synthase subunit alpha, chloroplastic (507 aa).

ATP is bound at residue 170-177 (GDRQTGKT).

The protein belongs to the ATPase alpha/beta chains family. In terms of assembly, F-type ATPases have 2 components, CF(1) - the catalytic core - and CF(0) - the membrane proton channel. CF(1) has five subunits: alpha(3), beta(3), gamma(1), delta(1), epsilon(1). CF(0) has four main subunits: a, b, b' and c.

Its subcellular location is the plastid. It is found in the chloroplast thylakoid membrane. The enzyme catalyses ATP + H2O + 4 H(+)(in) = ADP + phosphate + 5 H(+)(out). Its function is as follows. Produces ATP from ADP in the presence of a proton gradient across the membrane. The alpha chain is a regulatory subunit. In Physcomitrium patens (Spreading-leaved earth moss), this protein is ATP synthase subunit alpha, chloroplastic.